Here is a 670-residue protein sequence, read N- to C-terminus: MSLKSLEKETELPFDEYVLNDKWRHKYTPIDTYFKFHQQAIENLESFWESVAKELEWFKPWDKVLDASNPPFYKWFVGGRLNLSYLAVDRHVKTWRKNKLAIEWEGEPLDESGYPIDRRKLTYYDLFREVNRVACMLKCNFGVKKGDRVTLYLPMVPELPITMLAAWRIGAITNVVFSGFSADALAERINDSQSRIVITADGFWRRGKVVRLKEVVDSALEKAPGVENVIVLPRLGLKDVPMTEGRDFWWNRLMQGIPPNTYIEPEPVESEHPSFILYTSGTTGKPKGIVHDTGGWAVHVYATMKWVFDIRDDDIYWCTADIGWVTGHSYVVLGPLLMGTTEIIYEGAPDYPQPDRWWSIIERYGVTILYTSPTAIRMFMRYGEAWPGKHDLSTLRIIHSVGEPINPEAWRWAYRVLGNEKVAFGSTWWMTETGGIVISHAPGLYLVPMKPGTNGPPLPGFEVDVVDENGNPVPPGVKGYLVIKKPWPGMLHGIWGDPERYVKTYWSRFPGMFYVGDYAIKDKDGYIWVLGRADEVIKVAGHRLGTYELESAFVAHPAVAEAAVVGVPDAIKGEVPIAFVVLKQGVTPTEELRKELREHIRKSIGPIAEPAQIFFVTKLPKTRSGKIMRRLLKAVATGAPLGDVTTLEDETSVEEAKKAYEELKAEMAGP.

Residues 205-208 and T326 contribute to the CoA site; that span reads RRGK. Residues 402-404, 426-431, D517, R532, and R543 each bind ATP; these read GEP and STWWMT. Residues V554, H556, and V559 each coordinate Mg(2+). Residue R601 coordinates CoA. At K626 the chain carries N6-acetyllysine.

Belongs to the ATP-dependent AMP-binding enzyme family. It depends on Mg(2+) as a cofactor. In terms of processing, acetylated. Deacetylation by the SIR2-homolog deacetylase activates the enzyme.

It catalyses the reaction acetate + ATP + CoA = acetyl-CoA + AMP + diphosphate. Catalyzes the conversion of acetate into acetyl-CoA (AcCoA), an essential intermediate at the junction of anabolic and catabolic pathways. AcsA undergoes a two-step reaction. In the first half reaction, AcsA combines acetate with ATP to form acetyl-adenylate (AcAMP) intermediate. In the second half reaction, it can then transfer the acetyl group from AcAMP to the sulfhydryl group of CoA, forming the product AcCoA. This is Acetyl-coenzyme A synthetase from Pyrobaculum arsenaticum (strain DSM 13514 / JCM 11321 / PZ6).